We begin with the raw amino-acid sequence, 465 residues long: Opioid growth factor receptor-like protein 1 (465 aa).

2 disordered regions span residues 1–89 (MGNL…GNAK) and 309–465 (ENFI…TSSG). Basic and acidic residues-rich tracts occupy residues 48 to 59 (REQPEQPPERAG), 316 to 325 (PKKEQPERSK), 363 to 396 (TVEE…RNSE), and 426 to 440 (SEKD…KDSE). Positions 442-465 (PENTSCHAEVVSQQNVTNPQTSSG) are enriched in polar residues.

This sequence belongs to the opioid growth factor receptor family.

The protein is Opioid growth factor receptor-like protein 1 (Ogfrl1) of Rattus norvegicus (Rat).